Here is a 366-residue protein sequence, read N- to C-terminus: PTI1-like tyrosine-protein kinase 2 (366 aa).

The segment covering Gly8–Leu23 has biased composition (basic and acidic residues). Residues Gly8–Glu50 form a disordered region. Polar residues predominate over residues Pro26–Pro39. One can recognise a Protein kinase domain in the interval Phe71–Leu353. ATP-binding positions include Ile77–Val85 and Lys99. The active-site Proton acceptor is the Asp203.

This sequence belongs to the protein kinase superfamily. Tyr protein kinase family. In terms of assembly, interacts with OXI1. In terms of processing, autophosphorylated and phosphorylated by OXI1.

The catalysed reaction is L-tyrosyl-[protein] + ATP = O-phospho-L-tyrosyl-[protein] + ADP + H(+). Its activity is regulated as follows. Strongly activated in response to phosphatidic acid (PA) and xylanase in a OXI1- and PDK1-dependent manner, and, to a lesser extent, by hydrogen peroxide and flagellin in a OXI1-dependent manner. Probable tyrosine-protein kinase involved in oxidative burst-mediated signaling leading to specific genes expression. The polypeptide is PTI1-like tyrosine-protein kinase 2 (PTI12) (Arabidopsis thaliana (Mouse-ear cress)).